We begin with the raw amino-acid sequence, 81 residues long: 2,3-bisphosphoglycerate-independent phosphoglycerate mutase (81 aa).

Ser-14 (phosphoserine intermediate) is an active-site residue. Mn(2+) is bound at residue Ser-14. Residue His-75 coordinates substrate.

This sequence belongs to the BPG-independent phosphoglycerate mutase family. Monomer. Mn(2+) serves as cofactor.

It carries out the reaction (2R)-2-phosphoglycerate = (2R)-3-phosphoglycerate. The protein operates within carbohydrate degradation; glycolysis; pyruvate from D-glyceraldehyde 3-phosphate: step 3/5. Catalyzes the interconversion of 2-phosphoglycerate and 3-phosphoglycerate. This is 2,3-bisphosphoglycerate-independent phosphoglycerate mutase (gpmI) from Tomato big bud phytoplasma.